We begin with the raw amino-acid sequence, 683 residues long: DNA ligase (683 aa).

Residues 35–39 (DTEYD), 84–85 (SL), and Glu116 each bind NAD(+). Catalysis depends on Lys118, which acts as the N6-AMP-lysine intermediate. Residues Arg139, Glu176, Lys293, and Lys317 each contribute to the NAD(+) site. Zn(2+) is bound by residues Cys419, Cys422, Cys437, and Cys443. Residues 602-683 (AGPQLLAGKT…LMKLLAKGVE (82 aa)) form the BRCT domain.

This sequence belongs to the NAD-dependent DNA ligase family. LigA subfamily. Requires Mg(2+) as cofactor. It depends on Mn(2+) as a cofactor.

It catalyses the reaction NAD(+) + (deoxyribonucleotide)n-3'-hydroxyl + 5'-phospho-(deoxyribonucleotide)m = (deoxyribonucleotide)n+m + AMP + beta-nicotinamide D-nucleotide.. DNA ligase that catalyzes the formation of phosphodiester linkages between 5'-phosphoryl and 3'-hydroxyl groups in double-stranded DNA using NAD as a coenzyme and as the energy source for the reaction. It is essential for DNA replication and repair of damaged DNA. This Dechloromonas aromatica (strain RCB) protein is DNA ligase.